Consider the following 74-residue polypeptide: Large ribosomal subunit protein bL31 (74 aa).

It belongs to the bacterial ribosomal protein bL31 family. Type A subfamily. In terms of assembly, part of the 50S ribosomal subunit.

Its function is as follows. Binds the 23S rRNA. The polypeptide is Large ribosomal subunit protein bL31 (Phenylobacterium zucineum (strain HLK1)).